A 488-amino-acid chain; its full sequence is RNA binding exosome specificity factor Mmi1 (488 aa).

3 stretches are compositionally biased toward polar residues: residues 1 to 14 (MSNTNFSTSRSSKS), 33 to 47 (LNESGDTRSVWTTHT), and 54 to 66 (SVLSTSGSNNFSS). Disordered stretches follow at residues 1-20 (MSNTNFSTSRSSKSIPELPN) and 25-80 (RSLW…DAPI). Residues 71–80 (PAPESHDAPI) show a composition bias toward basic and acidic residues. Positions 95–122 (GKYDFSRHCTDYGHSYEWPYFRSLRRES) are interaction with erh1. Disordered stretches follow at residues 163 to 185 (SRLHGIQPPPKRRTLSPPPRRLA) and 225 to 261 (SYPVRSSPQLSHEDTRHGIASSGSTRYPFVPANTRAS). Thr-176 bears the Phosphothreonine mark. A phosphoserine mark is found at Ser-178, Ser-230, Ser-231, Ser-261, Ser-263, and Ser-265. Residues 289-299 (SYLLSNSSNDS) are compositionally biased toward low complexity. Residues 289-328 (SYLLSNSSNDSASRKEKPKARASTPPPLNFSRASEHRNEK) form a disordered region. Ser-311 bears the Phosphoserine mark. Thr-312 is modified (phosphothreonine). One can recognise a YTH domain in the interval 350–476 (SRYFIMLCDN…DEGSRLCTLI (127 aa)).

Component of the erh1-mmi1 complex composed of mmi1 and erh1. Interacts (via N-terminus) with erh1 in a 2:2 stoichiometry. Interacts with rrp6.

Its subcellular location is the nucleus. Its function is as follows. RNA-binding protein that recognizes and binds N6-methyladenosine (m6A)-containing RNAs, a modification present at internal sites of mRNAs and some non-coding RNAs. Functions alone and as part of the erh1-mmi1 complex, to recruit the CCR4-NOT complex and the NURS complex to target RNAs. Suppresses the meiotic program during vegetative growth and promotes the meiotic program during mating. Binds to DSR (determinant of selective removal) regions in meiotic mRNA, and recruits the NURS complex to targets. Recruitment of NURS complex to target mRNAs promotes mRNA decay by engagement of the nuclear exosome, and formation of heterochromatin islands at meiotic genes silenced by the exosome. Recruitment of the CCR4-NOT complex to target RNAs promotes heterochromatin formation at RNAi-dependent heterochromatin domains (HOODs), including a subset of meiotic genes, lncRNAs and retrotransposons. Recruitment of the CCR4-NOT complex to rDNA promotes rDNA heterochromatin assembly. Promotes non-canonical transcription termination at meiotic genes and prevents lncRNA transcription from invading and repressing adjacent genes. The polypeptide is RNA binding exosome specificity factor Mmi1 (mmi1) (Schizosaccharomyces pombe (strain 972 / ATCC 24843) (Fission yeast)).